We begin with the raw amino-acid sequence, 414 residues long: FAD-dependent monooxygenase adaC (414 aa).

FAD is bound by residues E32, A43, R115, D325, and G338.

It belongs to the paxM FAD-dependent monooxygenase family. FAD serves as cofactor.

The enzyme catalyses 3-(2,4-dioxopentyl)-3,6,8,9-tetrahydroxy-1-oxo-1,2,3,4-tetrahydroanthracene-2-carboxyl-[ACP] + NADPH + O2 + H(+) = 3-(2,4-dioxopentyl)-2,3,6,8,9-pentahydroxy-1-oxo-1,2,3,4-tetrahydroanthracene-2-carboxyl-[ACP] + NADP(+) + H2O. It participates in secondary metabolite biosynthesis. Its function is as follows. FAD-dependent monooxygenase; part of the gene cluster that mediates the biosynthesis of the linear tetracyclic TAN-1612 neuropeptide Y receptor antagonist. The decaketide backbone of TAN-1612 is synthesized by the non-reducing polyketide synthase adaA via condensation of one acetyl-CoA starter unit with 9 malonyl-CoA units. The FAD-dependent monooxygenase adaC then performs hydroxylation at C2 while the polaketide chain is still attached to the NRPKS adaA. The alpha-hydroxylation step at C2 appears to be crucial for the following C18-C1 Claisen cyclization and release of the C9-hydroxyl version of TAN-1612 from the NRPKS adaA, two steps performed by the lactamase-like protein adaB. Finally, the O-methyltransferase adaD performs the C9 O-methylation to complete the biosynthesis of TAN-1612. This chain is FAD-dependent monooxygenase adaC, found in Aspergillus niger (strain ATCC MYA-4892 / CBS 513.88 / FGSC A1513).